The following is a 274-amino-acid chain: Nitrogenase iron protein (274 aa).

An ATP-binding site is contributed by 8–15; the sequence is GKGGIGKS. C94 serves as a coordination point for [4Fe-4S] cluster. Residue R97 is modified to ADP-ribosylarginine; by dinitrogenase reductase ADP-ribosyltransferase. Residue C131 participates in [4Fe-4S] cluster binding.

The protein belongs to the NifH/BchL/ChlL family. In terms of assembly, homodimer. The cofactor is [4Fe-4S] cluster. In terms of processing, the reversible ADP-ribosylation of Arg-97 inactivates the nitrogenase reductase and regulates nitrogenase activity.

The enzyme catalyses N2 + 8 reduced [2Fe-2S]-[ferredoxin] + 16 ATP + 16 H2O = H2 + 8 oxidized [2Fe-2S]-[ferredoxin] + 2 NH4(+) + 16 ADP + 16 phosphate + 6 H(+). The key enzymatic reactions in nitrogen fixation are catalyzed by the nitrogenase complex, which has 2 components: the iron protein and the molybdenum-iron protein. This Chlorobium phaeobacteroides (strain BS1) protein is Nitrogenase iron protein.